The sequence spans 828 residues: Leucine--tRNA ligase (828 aa).

A 'HIGH' region motif is present at residues 36–46; that stretch reads PYPSGKIHIGH. Positions 595–599 match the 'KMSKS' region motif; it reads KMSKS. K598 is a binding site for ATP.

It belongs to the class-I aminoacyl-tRNA synthetase family.

It localises to the cytoplasm. The enzyme catalyses tRNA(Leu) + L-leucine + ATP = L-leucyl-tRNA(Leu) + AMP + diphosphate. The polypeptide is Leucine--tRNA ligase (Rickettsia prowazekii (strain Madrid E)).